The chain runs to 503 residues: Putative (R)-citramalate synthase CimA (503 aa).

Residues 9–257 form the Pyruvate carboxyltransferase domain; it reads IRFFDTTLRD…DTGIATEELY (249 aa).

It belongs to the alpha-IPM synthase/homocitrate synthase family. As to quaternary structure, homodimer.

It catalyses the reaction pyruvate + acetyl-CoA + H2O = (3R)-citramalate + CoA + H(+). It participates in amino-acid biosynthesis; L-isoleucine biosynthesis; 2-oxobutanoate from pyruvate: step 1/3. Catalyzes the condensation of pyruvate and acetyl-coenzyme A to form (R)-citramalate. The chain is Putative (R)-citramalate synthase CimA from Methanoculleus marisnigri (strain ATCC 35101 / DSM 1498 / JR1).